We begin with the raw amino-acid sequence, 440 residues long: MSTFSQTVPELVAWARKNDFSIQLPVDRLAFLLAIATLNGERLDGEMSEGELVDAFRHVSDAFEQSTETVAQRANNAINDMVRQRLLNRFTSEQAEGNAIYRLTPLGIGITDYYIRQREFSTLRLSMQLSIVASELKRAADAAQEGGDEFHWHRNVYAPLKYSVAEIFDSIDLTQRIMDEQQQLVKDDIAQLLNKDWRAAISSCELLLSETSGTLRELQDTLEAAGDKLQANLLQIQEATLGRDDLHFVDRLTYDLQSKLDRIISWGQQAIDLWIGYDRHVHKFIRTAIDMDKNRVFAQRLRQSVQNYFDAPWALTYASADRLLDMRDEEMTLRDEEVTGELPPDLEFEEFNEIREQLAAMIEAQLNVYRERQQPLDLSVVMRDYLTQFPRARHFDVARIVVDQAVRLGVAEADFTGLPAKWQPINDYGAKVQANVIDKY.

Positions 208–236 (LSETSGTLRELQDTLEAAGDKLQANLLQI) are leucine-zipper.

The protein belongs to the MukF family. As to quaternary structure, interacts, and probably forms a ternary complex, with MukE and MukB via its C-terminal region. The complex formation is stimulated by calcium or magnesium. It is required for an interaction between MukE and MukB.

The protein localises to the cytoplasm. It localises to the nucleoid. Functionally, involved in chromosome condensation, segregation and cell cycle progression. May participate in facilitating chromosome segregation by condensation DNA from both sides of a centrally located replisome during cell division. Not required for mini-F plasmid partitioning. Probably acts via its interaction with MukB and MukE. Overexpression results in anucleate cells. It has a calcium binding activity. The polypeptide is Chromosome partition protein MukF (Cronobacter sakazakii (strain ATCC BAA-894) (Enterobacter sakazakii)).